A 170-amino-acid chain; its full sequence is Ribulose bisphosphate carboxylase small subunit, chloroplastic (170 aa).

Transit peptides (chloroplast) lie at residues 1 to 46 (MAPT…GRIR) and 1 to 47 (MAPT…RIRC).

The protein belongs to the RuBisCO small chain family. In terms of assembly, heterohexadecamer of 8 large and 8 small subunits.

Its subcellular location is the plastid. It is found in the chloroplast. RuBisCO catalyzes two reactions: the carboxylation of D-ribulose 1,5-bisphosphate, the primary event in carbon dioxide fixation, as well as the oxidative fragmentation of the pentose substrate. Both reactions occur simultaneously and in competition at the same active site. Although the small subunit is not catalytic it is essential for maximal activity. The sequence is that of Ribulose bisphosphate carboxylase small subunit, chloroplastic from Zea mays (Maize).